A 436-amino-acid polypeptide reads, in one-letter code: MAKIVKVIGREIIDSRGNPTVEAEVHLEGGFVGLAAAPSGASTGSREALELRDGDKSRFLGKGVLKAVAAVNNEIAQAIVGKDATNQAEIDQIMIDLDGTENKSNFGANAILAVSLANAKAAAASKGLPLYAYIAELNGTAGVYSMPLPMMNIINGGEHADNNVDIQEFMIQPVGAKTLREALRIGAEVFHNLAKVLKSKGMSTAVGDEGGFAPNLASNADALACIKEAVEKAGYVLGKDVTLAMDCASSEFYNKENGMYEMKGEGKSFTSQEFTHYLEELTKQYPIVSIEDGQDESDWEGFAYQTKVLGDRVQLVGDDLFVTNTKILKEGIEKGIANSILIKFNQIGSLTETLAAIKMAKDAGYTAVISHRSGETEDATIADLAVGTAAGQIKTGSMSRSDRIAKYNQLIRIEEALERAGTPAAFPGLKAVKGQA.

Q167 lines the (2R)-2-phosphoglycerate pocket. E209 functions as the Proton donor in the catalytic mechanism. Residues D246, E291, and D318 each contribute to the Mg(2+) site. (2R)-2-phosphoglycerate is bound by residues K343, R372, S373, and K394. Residue K343 is the Proton acceptor of the active site.

It belongs to the enolase family. In terms of assembly, component of the RNA degradosome, a multiprotein complex involved in RNA processing and mRNA degradation. The cofactor is Mg(2+).

It localises to the cytoplasm. It is found in the secreted. Its subcellular location is the cell surface. The enzyme catalyses (2R)-2-phosphoglycerate = phosphoenolpyruvate + H2O. The protein operates within carbohydrate degradation; glycolysis; pyruvate from D-glyceraldehyde 3-phosphate: step 4/5. In terms of biological role, catalyzes the reversible conversion of 2-phosphoglycerate (2-PG) into phosphoenolpyruvate (PEP). It is essential for the degradation of carbohydrates via glycolysis. This chain is Enolase, found in Haemophilus influenzae (strain 86-028NP).